The chain runs to 146 residues: Benzoylsuccinyl-CoA thiolase subunit BbsA (146 aa).

C42, C45, C55, and C58 together coordinate Zn(2+).

This sequence belongs to the BbsA family. As to quaternary structure, heterotetramer composed of two BbsA subunits and two BbsB subunits. Both BbsA and BbsB are essential for enzymatic activity.

It carries out the reaction (S)-2-benzoylsuccinyl-CoA + CoA = benzoyl-CoA + succinyl-CoA. It participates in xenobiotic degradation; toluene degradation. Functionally, component of the BbsAB thiolase complex, which catalyzes the thiolytic cleavage of (S)-2-benzoylsuccinyl-CoA to succinyl-CoA and benzoyl-CoA, the final step of anaerobic toluene metabolism. The BbsA subunit critically contributes to an induced-fit process for productive binding of a CoA substrate into the active site of BbsB. In Geobacter metallireducens (strain ATCC 53774 / DSM 7210 / GS-15), this protein is Benzoylsuccinyl-CoA thiolase subunit BbsA.